A 162-amino-acid polypeptide reads, in one-letter code: MERTIDPGTLPYRPCVGIVLINREGLIFAGQRIDSPVPAWQMPQGGIDEGEKPREAALRELWEETGIPAERVEFVAKAPDWVTYDLPPELLGRVWGGKYRGQRQKWFLYRYLGTDDEVGIGTDHAEFSCWRWIGAEEMVAAIVPFKRAVYEEVVATFRPHLA.

The region spanning 11–155 (PYRPCVGIVL…KRAVYEEVVA (145 aa)) is the Nudix hydrolase domain. Residues 45–66 (GGIDEGEKPREAALRELWEETG) carry the Nudix box motif.

It belongs to the Nudix hydrolase family. RppH subfamily. It depends on a divalent metal cation as a cofactor.

Accelerates the degradation of transcripts by removing pyrophosphate from the 5'-end of triphosphorylated RNA, leading to a more labile monophosphorylated state that can stimulate subsequent ribonuclease cleavage. This Cereibacter sphaeroides (strain ATCC 17029 / ATH 2.4.9) (Rhodobacter sphaeroides) protein is RNA pyrophosphohydrolase.